Here is a 97-residue protein sequence, read N- to C-terminus: Ferredoxin-3 (97 aa).

4Fe-4S ferredoxin-type domains lie at Phe-18–Leu-47 and Lys-65–Leu-95. The [4Fe-4S] cluster site is built by Cys-27, Cys-30, Cys-33, Cys-37, Cys-75, Cys-78, Cys-81, and Cys-85.

Homodimer. [4Fe-4S] cluster is required as a cofactor.

Ferredoxins are iron-sulfur proteins that transfer electrons in a wide variety of metabolic reactions. In Nostoc sp. (strain PCC 7120 / SAG 25.82 / UTEX 2576), this protein is Ferredoxin-3 (fdxB).